A 402-amino-acid polypeptide reads, in one-letter code: MDWQTTSADTAPSSFITEEQDRSLFGKPPASGAWKESDPVGGRRFAGIGAFGFESGESLPFVRIAYETWGELSPARDNAVLVLHALTGDSHAVGAAGPGHRTSGWWQGIIGPGKAIDTDRWFVAVPNMLGGCQGTTGPTSIAPDGAEWGARFPFTTIRDQVKAQAAFADALGIGRWAAVVGGSMGGMQALEWAVGFPERVERLAVIAAPPHSTADQIAFNSVQLGAIRTDPLFHGGSYYDEKDGEGPHQGLALARRMALITYRSLSELNDRFERTWQSGISPLGDGGRFAVESYLDFHGNKFTRRFDANSYLTLVQAMNSHDVGHDGSGLAAALSRVTATTLVVGIDSDRLFPVDGQELIASHLPAALDGRVPLVVRSHFGHDGFLIEDDLIGGQLRRLFAA.

Polar residues predominate over residues 1-17 (MDWQTTSADTAPSSFIT). Residues 1–39 (MDWQTTSADTAPSSFITEEQDRSLFGKPPASGAWKESDP) are disordered. The AB hydrolase-1 domain occupies 78 to 388 (NAVLVLHALT…HFGHDGFLIE (311 aa)). Ser-183 functions as the Nucleophile in the catalytic mechanism. Arg-255 contributes to the substrate binding site. Active-site residues include Asp-349 and His-382. Residue Asp-383 coordinates substrate.

The protein belongs to the AB hydrolase superfamily. MetX family. Homodimer.

The protein resides in the cytoplasm. It carries out the reaction L-homoserine + acetyl-CoA = O-acetyl-L-homoserine + CoA. Its pathway is amino-acid biosynthesis; L-methionine biosynthesis via de novo pathway; O-acetyl-L-homoserine from L-homoserine: step 1/1. Its function is as follows. Transfers an acetyl group from acetyl-CoA to L-homoserine, forming acetyl-L-homoserine. In Leifsonia xyli subsp. xyli (strain CTCB07), this protein is Homoserine O-acetyltransferase.